The following is a 397-amino-acid chain: Probable pyruvate dehydrogenase E1 component subunit alpha, mitochondrial (397 aa).

Residues His86, Tyr112, Arg113, Gly159, Val161, Asp190, Gly191, Ala192, and Asn219 each coordinate pyruvate. Residues Tyr112, Arg113, Gly159, Val161, Asp190, Gly191, Ala192, Asn219, and His286 each coordinate thiamine diphosphate. Residue Asp190 participates in Mg(2+) binding. Asn219 serves as a coordination point for Mg(2+).

As to quaternary structure, tetramer of 2 alpha and 2 beta subunits. The cofactor is thiamine diphosphate. Mg(2+) serves as cofactor.

It localises to the mitochondrion matrix. The enzyme catalyses N(6)-[(R)-lipoyl]-L-lysyl-[protein] + pyruvate + H(+) = N(6)-[(R)-S(8)-acetyldihydrolipoyl]-L-lysyl-[protein] + CO2. With respect to regulation, E1 activity is regulated by phosphorylation (inactivation) and dephosphorylation (activation) of the alpha subunit. In terms of biological role, the pyruvate dehydrogenase complex catalyzes the overall conversion of pyruvate to acetyl-CoA and CO(2). It contains multiple copies of three enzymatic components: pyruvate dehydrogenase (E1), dihydrolipoamide acetyltransferase (E2) and lipoamide dehydrogenase (E3). The sequence is that of Probable pyruvate dehydrogenase E1 component subunit alpha, mitochondrial from Caenorhabditis elegans.